The sequence spans 430 residues: Putative FBD-associated F-box protein At5g56440 (430 aa).

Residues 1–49 (MDRISLLPDDVVFKILSFVPTKVVVSTNLLSKRWRYLWKHVPKLDYRDP) enclose the F-box domain. One can recognise an FBD domain in the interval 349 to 399 (QWEQPSSVPKCLISSLETVEWIDYKGREVEKKVVMYLLENSRQLKTMAIRS).

This chain is Putative FBD-associated F-box protein At5g56440, found in Arabidopsis thaliana (Mouse-ear cress).